A 201-amino-acid polypeptide reads, in one-letter code: Recombination protein RecR (201 aa).

The C4-type zinc-finger motif lies at 57–72 (CRSCRTFTEEDECNIC). Residues 81–176 (GQLCVVEMPE…KVTRIAHGIP (96 aa)) enclose the Toprim domain.

The protein belongs to the RecR family.

May play a role in DNA repair. It seems to be involved in an RecBC-independent recombinational process of DNA repair. It may act with RecF and RecO. The chain is Recombination protein RecR from Actinobacillus pleuropneumoniae serotype 5b (strain L20).